Consider the following 51-residue polypeptide: Lantibiotic streptococcin A-FF22 (51 aa).

A propeptide spanning residues methionine 1–alanine 25 is cleaved from the precursor. 2 consecutive cross-links (beta-methyllanthionine (Thr-Cys)) follow at residues threonine 33 to cysteine 38 and threonine 42 to cysteine 50. The segment at residues serine 35 to cysteine 49 is a cross-link (lanthionine (Ser-Cys)). Position 48 is a 2,3-didehydrobutyrine (threonine 48).

It belongs to the type A lantibiotic family. Post-translationally, maturation of lantibiotics involves the enzymatic conversion of Thr, and Ser into dehydrated AA and the formation of thioether bonds with cysteine. This is followed by membrane translocation and cleavage of the modified precursor.

It is found in the secreted. The protein localises to the cell surface. Lanthionine-containing peptide antibiotic (lantibiotic) active on certain Gram-positive bacteria. The bactericidal activity of lantibiotics is based on depolarization of energized bacterial cytoplasmic membranes, initiated by the formation of aqueous transmembrane pores. This is Lantibiotic streptococcin A-FF22 (scnA) from Streptococcus pyogenes.